The primary structure comprises 272 residues: 3-methyl-2-oxobutanoate hydroxymethyltransferase (272 aa).

The Mg(2+) site is built by Asp-43 and Asp-82. 3-methyl-2-oxobutanoate-binding positions include 43–44, Asp-82, and Lys-112; that span reads DS. Glu-114 serves as a coordination point for Mg(2+). Residue Glu-179 is the Proton acceptor of the active site.

This sequence belongs to the PanB family. In terms of assembly, homodecamer; pentamer of dimers. Mg(2+) serves as cofactor.

The protein localises to the cytoplasm. It catalyses the reaction 3-methyl-2-oxobutanoate + (6R)-5,10-methylene-5,6,7,8-tetrahydrofolate + H2O = 2-dehydropantoate + (6S)-5,6,7,8-tetrahydrofolate. The protein operates within cofactor biosynthesis; (R)-pantothenate biosynthesis; (R)-pantoate from 3-methyl-2-oxobutanoate: step 1/2. Catalyzes the reversible reaction in which hydroxymethyl group from 5,10-methylenetetrahydrofolate is transferred onto alpha-ketoisovalerate to form ketopantoate. This chain is 3-methyl-2-oxobutanoate hydroxymethyltransferase, found in Staphylococcus epidermidis (strain ATCC 35984 / DSM 28319 / BCRC 17069 / CCUG 31568 / BM 3577 / RP62A).